Consider the following 313-residue polypeptide: Homoserine O-succinyltransferase (313 aa).

The active-site Acyl-thioester intermediate is the Cys-142. Substrate-binding residues include Lys-163 and Ser-192. The Proton acceptor role is filled by His-235. Glu-237 is an active-site residue. Position 249 (Arg-249) interacts with substrate.

Belongs to the MetA family.

The protein resides in the cytoplasm. It catalyses the reaction L-homoserine + succinyl-CoA = O-succinyl-L-homoserine + CoA. The protein operates within amino-acid biosynthesis; L-methionine biosynthesis via de novo pathway; O-succinyl-L-homoserine from L-homoserine: step 1/1. Functionally, transfers a succinyl group from succinyl-CoA to L-homoserine, forming succinyl-L-homoserine. This is Homoserine O-succinyltransferase from Vibrio parahaemolyticus serotype O3:K6 (strain RIMD 2210633).